The following is a 236-amino-acid chain: 3-oxoacyl-[acyl-carrier-protein] reductase (236 aa).

Residue methionine 1 is modified to N-acetylmethionine. NADP(+) contacts are provided by residues 11–14 and 34–35; these read SRGI and RN. Position 40 is an N6-acetyllysine (lysine 40). NADP(+) is bound by residues aspartate 56 and 83–85; that span reads AAG. Lysine 96 carries the N6-acetyllysine modification. Serine 134 lines the substrate pocket. Residues tyrosine 147, lysine 151, and 180-182 each bind NADP(+); that span reads IRT. Catalysis depends on tyrosine 147, which acts as the Proton acceptor. Position 194 is an N6-acetyllysine (lysine 194).

The protein belongs to the short-chain dehydrogenases/reductases (SDR) family. As to quaternary structure, homotetramer (in vitro). Heterotetramer with HSD17B8; contains two molecules each of HSD17B8 and CBR4. Does not form homotetramers when HSD17B8 is coexpressed, only heterotetramers (in vitro).

It localises to the mitochondrion matrix. It carries out the reaction a (3R)-hydroxyacyl-[ACP] + NADP(+) = a 3-oxoacyl-[ACP] + NADPH + H(+). The enzyme catalyses a quinone + NADPH + H(+) = a quinol + NADP(+). It participates in lipid metabolism; fatty acid biosynthesis. Component of the heterotetramer complex KAR (3-ketoacyl-[acyl carrier protein] reductase or 3-ketoacyl-[ACP] reductase) that forms part of the mitochondrial fatty acid synthase (mtFAS). Beta-subunit of the KAR heterotetramer complex, responsible for the 3-ketoacyl-ACP reductase activity of the mtFAS, reduces 3-oxoacyl-[ACP] to (3R)-hydroxyacyl-[ACP] in a NADPH-dependent manner with no chain length preference, thereby participating in mitochondrial fatty acid biosynthesis. The homotetramer has NADPH-dependent quinone reductase activity (in vitro), hence could play a role in protection against cytotoxicity of exogenous quinones. As a heterotetramer, it can also reduce 9,10-phenanthrenequinone, 1,4-benzoquinone and various other o-quinones and p-quinones (in vitro). The chain is 3-oxoacyl-[acyl-carrier-protein] reductase (Cbr4) from Mus musculus (Mouse).